The primary structure comprises 659 residues: Alpha-amylase (659 aa).

A signal peptide spans 1-27 (MFAKRFKTSLLPLFAGFLLLFHLVLAG). The propeptide occupies 28–41 (PAAASAETANKSNE). Ca(2+)-binding residues include asparagine 142, threonine 178, aspartate 187, glycine 210, and aspartate 212. Aspartate 217 functions as the Nucleophile in the catalytic mechanism. Residue histidine 221 participates in Ca(2+) binding. Catalysis depends on glutamate 249, which acts as the Proton donor.

The protein belongs to the glycosyl hydrolase 13 family. Monomer. Ca(2+) is required as a cofactor.

Its subcellular location is the secreted. The catalysed reaction is Endohydrolysis of (1-&gt;4)-alpha-D-glucosidic linkages in polysaccharides containing three or more (1-&gt;4)-alpha-linked D-glucose units.. This Bacillus subtilis (strain 168) protein is Alpha-amylase (amyE).